The chain runs to 231 residues: Large ribosomal subunit protein uL1 (231 aa).

It belongs to the universal ribosomal protein uL1 family. Part of the 50S ribosomal subunit.

Binds directly to 23S rRNA. The L1 stalk is quite mobile in the ribosome, and is involved in E site tRNA release. Its function is as follows. Protein L1 is also a translational repressor protein, it controls the translation of the L11 operon by binding to its mRNA. This is Large ribosomal subunit protein uL1 from Alcanivorax borkumensis (strain ATCC 700651 / DSM 11573 / NCIMB 13689 / SK2).